Here is a 794-residue protein sequence, read N- to C-terminus: DNA ligase (794 aa).

Residues 35-39 (DAEYD), 84-85 (SL), and glutamate 126 each bind NAD(+). Lysine 128 (N6-AMP-lysine intermediate) is an active-site residue. NAD(+)-binding residues include arginine 149, glutamate 186, lysine 302, and lysine 326. Zn(2+) contacts are provided by cysteine 420, cysteine 423, cysteine 450, and cysteine 456. The BRCT domain maps to 711–794 (VEGLPLAGQT…KLFDEHGVAR (84 aa)).

The protein belongs to the NAD-dependent DNA ligase family. LigA subfamily. The cofactor is Mg(2+). Mn(2+) serves as cofactor.

The enzyme catalyses NAD(+) + (deoxyribonucleotide)n-3'-hydroxyl + 5'-phospho-(deoxyribonucleotide)m = (deoxyribonucleotide)n+m + AMP + beta-nicotinamide D-nucleotide.. Its function is as follows. DNA ligase that catalyzes the formation of phosphodiester linkages between 5'-phosphoryl and 3'-hydroxyl groups in double-stranded DNA using NAD as a coenzyme and as the energy source for the reaction. It is essential for DNA replication and repair of damaged DNA. This is DNA ligase from Pseudomonas aeruginosa (strain UCBPP-PA14).